Consider the following 1005-residue polypeptide: Myosin IE heavy chain (1005 aa).

In terms of domain architecture, Myosin motor spans 8–693 (EGVPDFVLLN…TLFYFEEKRE (686 aa)). 101–108 (GESGAGKT) contacts ATP. A disordered region spans residues 539–562 (SDPLVQGLFPPTRPEDSKKRPETA). A compositionally biased stretch (basic and acidic residues) spans 551-560 (RPEDSKKRPE). The interval 556 to 630 (KKRPETAGSQ…RAGFAGRIEY (75 aa)) is actin-binding. IQ domains follow at residues 694–722 (LEMPRIVTLIQKTWRGYRARSKWNQRKAA) and 716–745 (WNQRKAAIKIQLFYRSYRYKKWFRELHRAF). One can recognise a TH1 domain in the interval 810 to 1004 (KKKWDFRRHF…KGNQATIQFK (195 aa)).

This sequence belongs to the TRAFAC class myosin-kinesin ATPase superfamily. Myosin family. Myosin I heavy chain is single-headed. Dimer of a heavy and a light chain. Inability to self-assemble into filaments.

Myosin is a protein that binds to actin and has ATPase activity that is activated by actin. May play a role in moving membranes relative to actin. The chain is Myosin IE heavy chain (myoE) from Dictyostelium discoideum (Social amoeba).